A 199-amino-acid chain; its full sequence is Transmembrane protein 223 (199 aa).

Over 1-43 (MVASVPLRNVSHLLSVLRSQNVPRYLQNGVPRDVLLFRHERGR) the chain is Mitochondrial matrix. A helical membrane pass occupies residues 44-64 (FFAILGLFCAGQGIFWTSLAV). The Mitochondrial intermembrane segment spans residues 65–94 (AALSRPLSRVPAEAPNRSYQDLRSALWRYG). Residues 95 to 115 (LAVGCGTMGVLVLGAGLLYSL) traverse the membrane as a helical segment. The Mitochondrial matrix portion of the chain corresponds to 116 to 199 (RSVRSVMLLA…DNTVGAYRSL (84 aa)).

The protein belongs to the TMEM223 family. In terms of assembly, associates with the mitochondrial ribosome.

The protein localises to the mitochondrion inner membrane. In terms of biological role, mitochondrial ribosome-associated protein involved in the first steps of cytochrome c oxidase complex (complex IV) biogenesis. Stimulates the translation of MT-CO1 mRNA and is a constituent of early MT-CO1 assembly intermediates. The chain is Transmembrane protein 223 from Mus musculus (Mouse).